The chain runs to 35 residues: Sperm protamine alpha isoform 2 (35 aa).

The segment at 1 to 35 is disordered; that stretch reads MPRRRRRASRPIRRRRRARRSTAVRRRRRVVRRRR. A phosphoserine mark is found at Ser9 and Ser21.

Post-translationally, phosphorylated in immature sperm. Dephosphorylated in mature sperm allowing a stronger interaction with DNA. As to expression, gonads.

The protein resides in the nucleus. The protein localises to the chromosome. Functionally, protamines substitute for histones in the chromatin of sperm during the haploid phase of spermatogenesis. They compact sperm DNA into a highly condensed, stable and inactive complex. The polypeptide is Sperm protamine alpha isoform 2 (Scomber scombrus (Atlantic mackerel)).